Here is a 2628-residue protein sequence, read N- to C-terminus: Protein FMP27, mitochondrial (2628 aa).

The first 28 residues, M1–R28, serve as a signal peptide directing secretion. Positions K29–M192 are transmembrane domain. 9 LRR repeats span residues F160–V182, P213–Q236, I271–E296, Y306–E333, N571–N596, V835–H857, F1944–F1967, F2101–K2125, and I2303–K2327.

The protein localises to the cell membrane. It localises to the endoplasmic reticulum membrane. It is found in the mitochondrion membrane. Its function is as follows. Tube-forming lipid transport protein which binds to phosphatidylinositols and affects phosphatidylinositol-4,5-bisphosphate (PtdIns-4,5-P2) distribution. The sequence is that of Protein FMP27, mitochondrial from Saccharomyces cerevisiae (strain ATCC 204508 / S288c) (Baker's yeast).